Reading from the N-terminus, the 420-residue chain is L-rhamnose isomerase (420 aa).

Mn(2+) is bound by residues His-264, Asp-296, and Asp-298.

It belongs to the rhamnose isomerase family. Mn(2+) serves as cofactor.

The protein resides in the cytoplasm. The catalysed reaction is L-rhamnopyranose = L-rhamnulose. It participates in carbohydrate degradation; L-rhamnose degradation; glycerone phosphate from L-rhamnose: step 1/3. Its function is as follows. Catalyzes the interconversion of L-rhamnose and L-rhamnulose. The protein is L-rhamnose isomerase of Listeria monocytogenes serovar 1/2a (strain ATCC BAA-679 / EGD-e).